A 101-amino-acid polypeptide reads, in one-letter code: Small ribosomal subunit protein uS14 (101 aa).

Positions 1 to 10 are enriched in basic and acidic residues; the sequence is MAKKSAIEKN. The tract at residues 1-23 is disordered; the sequence is MAKKSAIEKNNRRKKMTKNAAPK. Residues 11-23 are compositionally biased toward basic residues; the sequence is NRRKKMTKNAAPK.

Belongs to the universal ribosomal protein uS14 family. Part of the 30S ribosomal subunit. Contacts proteins S3 and S10.

Its function is as follows. Binds 16S rRNA, required for the assembly of 30S particles and may also be responsible for determining the conformation of the 16S rRNA at the A site. This chain is Small ribosomal subunit protein uS14, found in Rhodopseudomonas palustris (strain TIE-1).